Here is a 333-residue protein sequence, read N- to C-terminus: Probable G-protein coupled receptor 33 (333 aa).

At 1-30 (MDLINSTDYLINASTLVRNSTQFLAPASKM) the chain is on the extracellular side. N-linked (GlcNAc...) asparagine glycosylation is found at asparagine 5, asparagine 12, and asparagine 19. Residues 31–53 (IIALSLYISSIIGTITNGLYLWV) form a helical membrane-spanning segment. The Cytoplasmic segment spans residues 54–64 (LRFKMKQTVNT). Residues 65–86 (LLFFHLILSYFISTMILPFMAT) form a helical membrane-spanning segment. Residues 87-103 (SQLQDNHWNFGTALCKV) are Extracellular-facing. Cysteine 101 and cysteine 179 are oxidised to a cystine. A helical membrane pass occupies residues 104-124 (FNGTLSLGMFTSVFFLSAIGL). The Cytoplasmic portion of the chain corresponds to 125–143 (DRYLLTLHPVWSQQHRTPR). A helical membrane pass occupies residues 144 to 165 (WASSIVLGVWISAAALSIPYLI). Over 166–209 (FRQTHHDRKGKVTCQNNYAVSTNWESKEMQALRQWIHVACFISR) the chain is Extracellular. A helical membrane pass occupies residues 210-230 (FLLGFLLPFFIIIFCYERVAS). At 231 to 246 (KVKERSLFKSSKPFKV) the chain is on the cytoplasmic side. A helical transmembrane segment spans residues 247–268 (MMTAIISFFVCWMPYHIHQGLL). At 269–283 (LTTNQSLLLELTLIL) the chain is on the extracellular side. Asparagine 272 carries an N-linked (GlcNAc...) asparagine glycan. Residues 284–303 (TVLTTSFNTIFSPTLYLFVG) traverse the membrane as a helical segment. Residues 304 to 333 (ENFKKVFKKSILALFESTFSEDSSVERTQT) are Cytoplasmic-facing.

It belongs to the G-protein coupled receptor 1 family.

It is found in the cell membrane. Orphan receptor; could be a chemoattractant receptor. The protein is Probable G-protein coupled receptor 33 (GPR33) of Pan troglodytes (Chimpanzee).